Consider the following 639-residue polypeptide: CD2-associated protein (639 aa).

Positions 1 to 59 (MVDYIVEYDYDAVHDDELTIRVGEIIRNVKKLQEEGWLEGELNGRRGMFPDNFVKEIKR) constitute an SH3 1; truncated domain. The segment at 1–175 (MVDYIVEYDY…EVTDDGETHE (175 aa)) is interaction with ANLN and localization to the midbody. Lys58 participates in a covalent cross-link: Glycyl lysine isopeptide (Lys-Gly) (interchain with G-Cter in SUMO2). A phosphoserine mark is found at Ser67, Ser80, and Ser86. The SH3 2 domain occupies 108–167 (TKKRQCKVLFEYIPQNEDELELKVGDIIDINEEVEEGWWSGTLNNKLGLFPSNFVKELEV). A compositionally biased stretch (basic and acidic residues) spans 168-177 (TDDGETHEAQ). Residues 168–209 (TDDGETHEAQDDSETVLAGPTSPIPSLGNVSETASGSVTQPK) form a disordered region. The span at 195–207 (GNVSETASGSVTQ) shows a compositional bias: polar residues. Ser224 carries the post-translational modification Phosphoserine. The segment at 227-256 (LRTRTSSSETEEKKPEKPLILQSLGPKTQS) is disordered. The region spanning 269–330 (KAKEYCRTLF…PDNFAVQINE (62 aa)) is the SH3 3 domain. The segment at 333–428 (KDFPKPKKPP…PPPPIAKING (96 aa)) is disordered. Short sequence motifs (SH3-binding) lie at residues 336 to 352 (PKPK…APKP), 378 to 397 (KPSK…PPTK), and 410 to 422 (PKRP…PPPP). Residues 341–351 (PPPPAKAPAPK) show a composition bias toward pro residues. A compositionally biased stretch (basic and acidic residues) spans 356–379 (AAEKKYFSLKPEEKDEKSTLEQKP). A compositionally biased stretch (pro residues) spans 385–395 (PQVPPKKPTPP). 5 positions are modified to phosphoserine: Ser458, Ser463, Ser469, Ser510, and Ser514. A Glycyl lysine isopeptide (Lys-Gly) (interchain with G-Cter in SUMO2) cross-link involves residue Lys523. Thr565 carries the phosphothreonine modification. Positions 577–638 (DVKKNSLDEL…IEKLKKAVLS (62 aa)) form a coiled coil. Ser582 bears the Phosphoserine mark.

As to quaternary structure, homodimer. Interacts with F-actin, PKD2, NPHS1 and NPHS2. Interacts with WTIP. Interacts with DDN; interaction is direct. Interacts (via SH3 2 domain) with CBL (via phosphorylated C-terminus). Interacts with BCAR1/p130Cas (via SH3 domain). Interacts with MVB12A and ARHGAP17. Interacts with ANLN, CD2 and CBLB. Interacts with PDCD6IP and TSG101. Interacts with RIN3. Interacts directly with RET (inactive) and CBLC; upon RET activation by GDNF suggested to dissociate from RET as CBLC:CD2AP complex. Interacts with CGNL1 and SH3BP1; probably part of a complex at cell junctions. Interacts with CAPZA1. (Microbial infection) Interacts (via SH3 domains) with Chikungunya virus non-structural protein 3 (via C-terminus); this interaction plays a role in initiation of viral replication. Phosphorylated on tyrosine residues; probably by c-Abl, Fyn and c-Src. As to expression, widely expressed in fetal and adult tissues.

The protein resides in the cytoplasm. It localises to the cytoskeleton. It is found in the cell projection. Its subcellular location is the ruffle. The protein localises to the cell junction. Functionally, seems to act as an adapter protein between membrane proteins and the actin cytoskeleton. In collaboration with CBLC, modulates the rate of RET turnover and may act as regulatory checkpoint that limits the potency of GDNF on neuronal survival. Controls CBLC function, converting it from an inhibitor to a promoter of RET degradation. May play a role in receptor clustering and cytoskeletal polarity in the junction between T-cell and antigen-presenting cell. May anchor the podocyte slit diaphragm to the actin cytoskeleton in renal glomerolus. Also required for cytokinesis. Plays a role in epithelial cell junctions formation. The sequence is that of CD2-associated protein (CD2AP) from Homo sapiens (Human).